We begin with the raw amino-acid sequence, 975 residues long: Glycine dehydrogenase (decarboxylating) (975 aa).

N6-(pyridoxal phosphate)lysine is present on lysine 723.

Belongs to the GcvP family. As to quaternary structure, the glycine cleavage system is composed of four proteins: P, T, L and H. Pyridoxal 5'-phosphate serves as cofactor.

It carries out the reaction N(6)-[(R)-lipoyl]-L-lysyl-[glycine-cleavage complex H protein] + glycine + H(+) = N(6)-[(R)-S(8)-aminomethyldihydrolipoyl]-L-lysyl-[glycine-cleavage complex H protein] + CO2. Its function is as follows. The glycine cleavage system catalyzes the degradation of glycine. The P protein binds the alpha-amino group of glycine through its pyridoxal phosphate cofactor; CO(2) is released and the remaining methylamine moiety is then transferred to the lipoamide cofactor of the H protein. In Burkholderia cenocepacia (strain HI2424), this protein is Glycine dehydrogenase (decarboxylating).